The chain runs to 88 residues: Small ribosomal subunit protein uS15 (88 aa).

It belongs to the universal ribosomal protein uS15 family. In terms of assembly, part of the 30S ribosomal subunit. Forms a bridge to the 50S subunit in the 70S ribosome, contacting the 23S rRNA.

One of the primary rRNA binding proteins, it binds directly to 16S rRNA where it helps nucleate assembly of the platform of the 30S subunit by binding and bridging several RNA helices of the 16S rRNA. In terms of biological role, forms an intersubunit bridge (bridge B4) with the 23S rRNA of the 50S subunit in the ribosome. The protein is Small ribosomal subunit protein uS15 of Flavobacterium psychrophilum (strain ATCC 49511 / DSM 21280 / CIP 103535 / JIP02/86).